The chain runs to 420 residues: Ribosome biogenesis protein WDR12 homolog (420 aa).

Residues 10 to 92 (VQVHLKTKQE…EDAIEIEYVE (83 aa)) are ubiquitin-like (UBL) domain. WD repeat units follow at residues 104 to 142 (LHDD…LTIS), 143 to 185 (GHTA…NAVD), 192 to 231 (GHER…GVEG), 250 to 288 (GHRE…IKTE), 290 to 329 (STNK…GSVV), 335 to 375 (GHNA…APLY), and 379 to 417 (GHGD…AEDT).

It belongs to the WD repeat WDR12/YTM1 family.

The protein resides in the nucleus. Its subcellular location is the nucleolus. It localises to the nucleoplasm. Its function is as follows. Required for maturation of ribosomal RNAs and formation of the large ribosomal subunit. The polypeptide is Ribosome biogenesis protein WDR12 homolog (Drosophila sechellia (Fruit fly)).